The sequence spans 461 residues: 3-deoxy-D-manno-octulosonic acid transferase (461 aa).

A helical; Signal-anchor transmembrane segment spans residues 2–22 (MLLYYTLSFILLPVYFIIIFI). The RPE1 insert domain occupies 47-88 (SALDFIQMSVNKEGFTDHKTTSYVDMHRNASLMYKLSLERSY). Glutamate 102 acts as the Proton acceptor in catalysis. Residues 306 to 307 (PR), 347 to 349 (FGE), and 372 to 375 (NILE) contribute to the CMP site.

This sequence belongs to the glycosyltransferase group 1 family. Glycosyltransferase 30 subfamily.

The protein localises to the cell inner membrane. It catalyses the reaction lipid IVA (E. coli) + CMP-3-deoxy-beta-D-manno-octulosonate = alpha-Kdo-(2-&gt;6)-lipid IVA (E. coli) + CMP + H(+). It participates in bacterial outer membrane biogenesis; LPS core biosynthesis. In terms of biological role, involved in lipopolysaccharide (LPS) biosynthesis. Catalyzes the transfer of 3-deoxy-D-manno-octulosonate (Kdo) residue(s) from CMP-Kdo to lipid IV(A), the tetraacyldisaccharide-1,4'-bisphosphate precursor of lipid A. In Rickettsia prowazekii (strain Madrid E), this protein is 3-deoxy-D-manno-octulosonic acid transferase (waaA).